The sequence spans 43 residues: Photosystem II reaction center protein K (43 aa).

Positions M1 to A6 are excised as a propeptide. The helical transmembrane segment at I18–A38 threads the bilayer.

Belongs to the PsbK family. In terms of assembly, PSII is composed of 1 copy each of membrane proteins PsbA, PsbB, PsbC, PsbD, PsbE, PsbF, PsbH, PsbI, PsbJ, PsbK, PsbL, PsbM, PsbT, PsbX, PsbY, PsbZ, Psb30/Ycf12, at least 3 peripheral proteins of the oxygen-evolving complex and a large number of cofactors. It forms dimeric complexes.

Its subcellular location is the plastid. The protein localises to the chloroplast thylakoid membrane. Functionally, one of the components of the core complex of photosystem II (PSII). PSII is a light-driven water:plastoquinone oxidoreductase that uses light energy to abstract electrons from H(2)O, generating O(2) and a proton gradient subsequently used for ATP formation. It consists of a core antenna complex that captures photons, and an electron transfer chain that converts photonic excitation into a charge separation. This is Photosystem II reaction center protein K from Oltmannsiellopsis viridis (Marine flagellate).